The chain runs to 230 residues: Cytochrome c oxidase subunit 2 (230 aa).

Residues 1-14 are Mitochondrial intermembrane-facing; the sequence is MAHPSQLGFQDAAS. Residues 15 to 45 form a helical membrane-spanning segment; it reads PVMEELLHFHDHALMIVLLISTLVLYIIVAM. Topologically, residues 46 to 59 are mitochondrial matrix; sequence VSTKLTNKYILDSQ. The helical transmembrane segment at 60 to 87 threads the bilayer; that stretch reads EIEIVWTVLPAVILILIALPSLRILYLM. Residues 88-230 lie on the Mitochondrial intermembrane side of the membrane; the sequence is DEINDPHLTI…KWSTMMLEDA (143 aa). The Cu cation site is built by His161, Cys196, Glu198, Cys200, His204, and Met207. Residue Glu198 coordinates Mg(2+).

The protein belongs to the cytochrome c oxidase subunit 2 family. Component of the cytochrome c oxidase (complex IV, CIV), a multisubunit enzyme composed of 14 subunits. The complex is composed of a catalytic core of 3 subunits MT-CO1, MT-CO2 and MT-CO3, encoded in the mitochondrial DNA, and 11 supernumerary subunits COX4I, COX5A, COX5B, COX6A, COX6B, COX6C, COX7A, COX7B, COX7C, COX8 and NDUFA4, which are encoded in the nuclear genome. The complex exists as a monomer or a dimer and forms supercomplexes (SCs) in the inner mitochondrial membrane with NADH-ubiquinone oxidoreductase (complex I, CI) and ubiquinol-cytochrome c oxidoreductase (cytochrome b-c1 complex, complex III, CIII), resulting in different assemblies (supercomplex SCI(1)III(2)IV(1) and megacomplex MCI(2)III(2)IV(2)). Found in a complex with TMEM177, COA6, COX18, COX20, SCO1 and SCO2. Interacts with TMEM177 in a COX20-dependent manner. Interacts with COX20. Interacts with COX16. It depends on Cu cation as a cofactor.

It is found in the mitochondrion inner membrane. The enzyme catalyses 4 Fe(II)-[cytochrome c] + O2 + 8 H(+)(in) = 4 Fe(III)-[cytochrome c] + 2 H2O + 4 H(+)(out). Functionally, component of the cytochrome c oxidase, the last enzyme in the mitochondrial electron transport chain which drives oxidative phosphorylation. The respiratory chain contains 3 multisubunit complexes succinate dehydrogenase (complex II, CII), ubiquinol-cytochrome c oxidoreductase (cytochrome b-c1 complex, complex III, CIII) and cytochrome c oxidase (complex IV, CIV), that cooperate to transfer electrons derived from NADH and succinate to molecular oxygen, creating an electrochemical gradient over the inner membrane that drives transmembrane transport and the ATP synthase. Cytochrome c oxidase is the component of the respiratory chain that catalyzes the reduction of oxygen to water. Electrons originating from reduced cytochrome c in the intermembrane space (IMS) are transferred via the dinuclear copper A center (CU(A)) of subunit 2 and heme A of subunit 1 to the active site in subunit 1, a binuclear center (BNC) formed by heme A3 and copper B (CU(B)). The BNC reduces molecular oxygen to 2 water molecules using 4 electrons from cytochrome c in the IMS and 4 protons from the mitochondrial matrix. The protein is Cytochrome c oxidase subunit 2 (mt-co2) of Salmo salar (Atlantic salmon).